The sequence spans 162 residues: 2-C-methyl-D-erythritol 2,4-cyclodiphosphate synthase (162 aa).

A divalent metal cation contacts are provided by D8 and H10. 4-CDP-2-C-methyl-D-erythritol 2-phosphate contacts are provided by residues 8-10 (DVH) and 36-37 (HS). H44 is a binding site for a divalent metal cation. 4-CDP-2-C-methyl-D-erythritol 2-phosphate contacts are provided by residues 58-60 (DIG), 63-67 (FPDTD), 102-108 (AQAPKMA), 134-137 (TTTE), F141, and R144.

It belongs to the IspF family. In terms of assembly, homotrimer. It depends on a divalent metal cation as a cofactor.

It catalyses the reaction 4-CDP-2-C-methyl-D-erythritol 2-phosphate = 2-C-methyl-D-erythritol 2,4-cyclic diphosphate + CMP. It functions in the pathway isoprenoid biosynthesis; isopentenyl diphosphate biosynthesis via DXP pathway; isopentenyl diphosphate from 1-deoxy-D-xylulose 5-phosphate: step 4/6. Involved in the biosynthesis of isopentenyl diphosphate (IPP) and dimethylallyl diphosphate (DMAPP), two major building blocks of isoprenoid compounds. Catalyzes the conversion of 4-diphosphocytidyl-2-C-methyl-D-erythritol 2-phosphate (CDP-ME2P) to 2-C-methyl-D-erythritol 2,4-cyclodiphosphate (ME-CPP) with a corresponding release of cytidine 5-monophosphate (CMP). This chain is 2-C-methyl-D-erythritol 2,4-cyclodiphosphate synthase, found in Yersinia pseudotuberculosis serotype IB (strain PB1/+).